We begin with the raw amino-acid sequence, 554 residues long: MRISASTVLLGAASAASAASFQNQAQHVLADNFHKAHDAVKPVADSFAHTTLESFEEAFNGMNSQAKALWDEIKLLVPENAFDKPTWFSKPKAAKRRKDWDHVVKGADVQKLWVKGADGEKHREVGGQLDNFNLRVKSVDPSKLGVDKVKQYSGYLDDEENDKHLFYWFFESRNDPKNDPVVLWLNGGPGCSSLTGLFLELGPSSIDKKLRVVSNEYAWNNNASVIFLDQPVNVGYSYSGNAVSNTVAAGKDVYALLTLFFHQFPEYAKQDFHIAGESYAGHYIPVFASEILSHKDRNINLKSVLIGNGLTDPLTQYEHYRPMACGEGGYPAVLSESECRSMDNALPRCQSLIRNCYESGSVWSCVPAAIYCNNQFIGPYQRTGQNVYDIRGKCEDDSNLCYSALGWISDYLNQKDVMDALGVEVEGYESCNFDINRNFLFQGDWMQPFHRLVPGILKEIPVLIYAGDADFICNWLGNKAWSEALEWPGKNGFNKAELEDLSLPKADKEYGKVKSSGNFTFMQIYQAGHMVPMDQPENSLDFLNRWLGGEWFEQ.

An N-terminal signal peptide occupies residues 1–17 (MRISASTVLLGAASAAS). Positions 18 to 137 (AASFQNQAQH…QLDNFNLRVK (120 aa)) are excised as a propeptide. Intrachain disulfides connect cysteine 191-cysteine 431, cysteine 325-cysteine 339, cysteine 349-cysteine 372, cysteine 356-cysteine 365, and cysteine 394-cysteine 401. Asparagine 222 is a glycosylation site (N-linked (GlcNAc...) asparagine). Serine 278 is an active-site residue. The active site involves aspartate 470. Asparagine 518 carries an N-linked (GlcNAc...) asparagine glycan. Histidine 529 is a catalytic residue.

Belongs to the peptidase S10 family.

The protein localises to the vacuole. The catalysed reaction is Release of a C-terminal amino acid with broad specificity.. Vacuolar carboxypeptidase involved in degradation of small peptides. Digests preferentially peptides containing an aliphatic or hydrophobic residue in P1' position, as well as methionine, leucine or phenylalanine in P1 position of ester substrate. This chain is Carboxypeptidase Y homolog A (cpyA), found in Neurospora crassa (strain ATCC 24698 / 74-OR23-1A / CBS 708.71 / DSM 1257 / FGSC 987).